Consider the following 111-residue polypeptide: Ig kappa chain V-III region PC 2485/PC 4039 (111 aa).

Positions 1 to 23 are framework-1; it reads DIVLTQSPASLAVSLGQRATISC. A disulfide bridge links C23 with C92. Positions 24 to 38 are complementarity-determining-1; that stretch reads RASKSVSTSGYSYMH. Positions 39-53 are framework-2; that stretch reads WYQQKPGQPPKLLIY. The complementarity-determining-2 stretch occupies residues 54 to 60; it reads LASSLES. A framework-3 region spans residues 61–92; that stretch reads GVPARFSGSGSGTDFTLNIQPVEEEDAAIYYC. The segment at 93 to 101 is complementarity-determining-3; that stretch reads QHSRELPLT. Positions 102–111 are framework-4; the sequence is FGAGTKLELK.

This chain is Ig kappa chain V-III region PC 2485/PC 4039, found in Mus musculus (Mouse).